A 311-amino-acid chain; its full sequence is Serpentine receptor class gamma-6 (311 aa).

7 helical membrane-spanning segments follow: residues 24–44 (MGQL…IYVI), 58–78 (FWLL…FDIF), 101–121 (PLLI…KMVA), 148–168 (LTAC…NILI), 200–220 (YMQI…AILW), 235–255 (IWFA…YLHM), and 266–286 (IFML…VIMI).

The protein belongs to the nematode receptor-like protein srg family.

The protein localises to the membrane. This is Serpentine receptor class gamma-6 (srg-6) from Caenorhabditis elegans.